The chain runs to 293 residues: GDT1-like protein 3 (293 aa).

Residues 1-25 (MGLISNPTRLILVATIFFLVSSISG) form the signal peptide. Helical transmembrane passes span 89–109 (FSMI…ALMA), 115–135 (ATVL…STGL), 148–168 (TNSA…YIAW), 200–220 (LFSR…FLAE), 238–258 (AIGV…LAVV), and 272–292 (VATV…FYPP).

Belongs to the GDT1 family.

The protein resides in the membrane. The protein is GDT1-like protein 3 of Arabidopsis thaliana (Mouse-ear cress).